Here is a 192-residue protein sequence, read N- to C-terminus: Signal peptidase complex catalytic subunit sec11 (192 aa).

At 1–18 (MLSFLSSNLSNTRQSIAQ) the chain is on the cytoplasmic side. A helical; Signal-anchor for type II membrane protein membrane pass occupies residues 19 to 39 (VLNFALVLSTAFMLWKGLSVV). The Lumenal segment spans residues 40–192 (TASSSPIVVV…MGLMVILQRE (153 aa)). Catalysis depends on charge relay system residues S53, H92, and D134. Residues 178–189 (VLLGIMGLMVIL) form a C-terminal short (CTS) helix region.

The protein belongs to the peptidase S26B family. Component of the signal peptidase complex (SPC) composed of a catalytic subunit SEC11 and three accessory subunits SPC1, SPC2 and SPC3. The complex induces a local thinning of the ER membrane which is used to measure the length of the signal peptide (SP) h-region of protein substrates. This ensures the selectivity of the complex towards h-regions shorter than 18-20 amino acids. SPC associates with the translocon complex.

Its subcellular location is the endoplasmic reticulum membrane. It catalyses the reaction Cleavage of hydrophobic, N-terminal signal or leader sequences from secreted and periplasmic proteins.. Functionally, catalytic component of the signal peptidase complex (SPC) which catalyzes the cleavage of N-terminal signal sequences from nascent proteins as they are translocated into the lumen of the endoplasmic reticulum. Specifically cleaves N-terminal signal peptides that contain a hydrophobic alpha-helix (h-region) shorter than 18-20 amino acids. The chain is Signal peptidase complex catalytic subunit sec11 (sec11) from Emericella nidulans (strain FGSC A4 / ATCC 38163 / CBS 112.46 / NRRL 194 / M139) (Aspergillus nidulans).